The primary structure comprises 180 residues: Translation initiation factor IF-3 (180 aa).

This sequence belongs to the IF-3 family. In terms of assembly, monomer.

It is found in the cytoplasm. In terms of biological role, IF-3 binds to the 30S ribosomal subunit and shifts the equilibrium between 70S ribosomes and their 50S and 30S subunits in favor of the free subunits, thus enhancing the availability of 30S subunits on which protein synthesis initiation begins. The sequence is that of Translation initiation factor IF-3 from Mesoplasma florum (strain ATCC 33453 / NBRC 100688 / NCTC 11704 / L1) (Acholeplasma florum).